Consider the following 679-residue polypeptide: Penicillin-binding protein 1A (679 aa).

Residues 1–14 show a composition bias toward basic residues; it reads MTERKREHKDRKQN. The interval 1–20 is disordered; that stretch reads MTERKREHKDRKQNKNSPKN. The Cytoplasmic segment spans residues 1 to 30; the sequence is MTERKREHKDRKQNKNSPKNQSKVTKFLKW. A helical; Signal-anchor for type II membrane protein membrane pass occupies residues 31 to 51; it reads FFIGILLLGITAVTVVGIYVL. Over 52–679 the chain is Extracellular; it reads SIIRSSPELD…QYKEVDNLVE (628 aa). The segment at 72 to 244 is transglycosylase; sequence SILYDDQGNF…PTSYDGLSEA (173 aa). Glu111 serves as the catalytic Proton donor; for transglycosylase activity. The segment at 378 to 663 is transpeptidase; the sequence is ASATIIDYKT…TSPIFGKIMG (286 aa). Ser417 (acyl-ester intermediate; for transpeptidase activity) is an active-site residue.

It in the N-terminal section; belongs to the glycosyltransferase 51 family. In the C-terminal section; belongs to the transpeptidase family.

It is found in the cell membrane. The catalysed reaction is [GlcNAc-(1-&gt;4)-Mur2Ac(oyl-L-Ala-gamma-D-Glu-L-Lys-D-Ala-D-Ala)](n)-di-trans,octa-cis-undecaprenyl diphosphate + beta-D-GlcNAc-(1-&gt;4)-Mur2Ac(oyl-L-Ala-gamma-D-Glu-L-Lys-D-Ala-D-Ala)-di-trans,octa-cis-undecaprenyl diphosphate = [GlcNAc-(1-&gt;4)-Mur2Ac(oyl-L-Ala-gamma-D-Glu-L-Lys-D-Ala-D-Ala)](n+1)-di-trans,octa-cis-undecaprenyl diphosphate + di-trans,octa-cis-undecaprenyl diphosphate + H(+). It catalyses the reaction Preferential cleavage: (Ac)2-L-Lys-D-Ala-|-D-Ala. Also transpeptidation of peptidyl-alanyl moieties that are N-acyl substituents of D-alanine.. It participates in cell wall biogenesis; peptidoglycan biosynthesis. Functionally, cell wall formation. Synthesis of cross-linked peptidoglycan from the lipid intermediates. The enzyme has a penicillin-insensitive transglycosylase N-terminal domain (formation of linear glycan strands) and a penicillin-sensitive transpeptidase C-terminal domain (cross-linking of the peptide subunits). This Clostridium perfringens (strain 13 / Type A) protein is Penicillin-binding protein 1A (pbpA).